Consider the following 642-residue polypeptide: Extracellular metalloproteinase 4 (642 aa).

Residues 1–18 form the signal peptide; the sequence is MHGLLLAGLLALPLNVLA. The propeptide occupies 19–253; that stretch reads HPTESHSSGI…VHSVVDYVSA (235 aa). The span at 49 to 60 shows a compositional bias: polar residues; sequence SDSLTGQDGQSF. The disordered stretch occupies residues 49–72; it reads SDSLTGQDGQSFTASSADADTSSG. Residues 61-71 show a composition bias toward low complexity; the sequence is TASSADADTSS. Asparagine 419 carries an N-linked (GlcNAc...) asparagine glycan. Histidine 436 lines the Zn(2+) pocket. Glutamate 437 is an active-site residue. Residue histidine 440 coordinates Zn(2+). Residues asparagine 509 and asparagine 602 are each glycosylated (N-linked (GlcNAc...) asparagine).

This sequence belongs to the peptidase M36 family. The cofactor is Zn(2+).

It localises to the secreted. Secreted metalloproteinase that allows assimilation of proteinaceous substrates and probably acts as a virulence factor. The protein is Extracellular metalloproteinase 4 (MEP4) of Arthroderma gypseum (strain ATCC MYA-4604 / CBS 118893) (Microsporum gypseum).